Reading from the N-terminus, the 254-residue chain is MTQAFTVVIPARYASTRLPGKPLQDIAGQPMIQRVWNQARKSAASRVVVATDDERILAACQGFGAEALLTRAEHNSGTDRLEEVASRLGLASDAIVVNVQGDEPLIPPALIDQVAANLAAHPEAAIATLAEPIHEVSALFNPNVVKVATDIDGLALTFSRAPLPWARDAFARDRDSLPEGVPYRRHIGIYAYRVGFLADFVAWGPCWLENAESLEQLRALWHGVRIHVADARENMLPGVDTPEDLERVRRVLGG.

It belongs to the KdsB family.

The protein resides in the cytoplasm. It catalyses the reaction 3-deoxy-alpha-D-manno-oct-2-ulosonate + CTP = CMP-3-deoxy-beta-D-manno-octulosonate + diphosphate. Its pathway is nucleotide-sugar biosynthesis; CMP-3-deoxy-D-manno-octulosonate biosynthesis; CMP-3-deoxy-D-manno-octulosonate from 3-deoxy-D-manno-octulosonate and CTP: step 1/1. It participates in bacterial outer membrane biogenesis; lipopolysaccharide biosynthesis. Its function is as follows. Activates KDO (a required 8-carbon sugar) for incorporation into bacterial lipopolysaccharide in Gram-negative bacteria. The protein is 3-deoxy-manno-octulosonate cytidylyltransferase of Pseudomonas aeruginosa (strain ATCC 15692 / DSM 22644 / CIP 104116 / JCM 14847 / LMG 12228 / 1C / PRS 101 / PAO1).